The chain runs to 392 residues: Phosphoglycerate kinase (392 aa).

Substrate is bound by residues 21–23, arginine 36, 59–62, arginine 113, and arginine 146; these read DFN and HLGR. ATP contacts are provided by residues lysine 197, glutamate 319, and 345–348; that span reads GGDT.

It belongs to the phosphoglycerate kinase family. Monomer.

The protein localises to the cytoplasm. The enzyme catalyses (2R)-3-phosphoglycerate + ATP = (2R)-3-phospho-glyceroyl phosphate + ADP. It functions in the pathway carbohydrate degradation; glycolysis; pyruvate from D-glyceraldehyde 3-phosphate: step 2/5. In Francisella tularensis subsp. novicida (strain U112), this protein is Phosphoglycerate kinase.